The chain runs to 220 residues: 1-Cys peroxiredoxin B (220 aa).

The Thioredoxin domain maps to 4 to 165; sequence LTLGDVVPDL…VLRATDALLT (162 aa). Cys46 functions as the Cysteine sulfenic acid (-SOH) intermediate in the catalytic mechanism. Residues 195-218 carry the Bipartite nuclear localization signal motif; that stretch reads KARFPAGFETAQLPSNKCYLRFTQ.

The protein belongs to the peroxiredoxin family. Prx6 subfamily.

It is found in the nucleus. Its subcellular location is the cytoplasm. It carries out the reaction a hydroperoxide + [thioredoxin]-dithiol = an alcohol + [thioredoxin]-disulfide + H2O. Functionally, thiol-specific peroxidase that catalyzes the reduction of hydrogen peroxide and organic hydroperoxides to water and alcohols, respectively. Seems to contribute to the inhibition of germination during stress. In Oryza sativa subsp. japonica (Rice), this protein is 1-Cys peroxiredoxin B.